A 206-amino-acid chain; its full sequence is Protein GrpE (206 aa).

Basic and acidic residues predominate over residues 1-14 (MDKKNEQQEVREEN). The interval 1–56 (MDKKNEQQEVREENDTSINQESETQVELEEEVVNEECETSSEKTDEKEVDDENVTD) is disordered. The segment covering 24–39 (TQVELEEEVVNEECET) has biased composition (acidic residues).

Belongs to the GrpE family. In terms of assembly, homodimer.

It is found in the cytoplasm. In terms of biological role, participates actively in the response to hyperosmotic and heat shock by preventing the aggregation of stress-denatured proteins, in association with DnaK and GrpE. It is the nucleotide exchange factor for DnaK and may function as a thermosensor. Unfolded proteins bind initially to DnaJ; upon interaction with the DnaJ-bound protein, DnaK hydrolyzes its bound ATP, resulting in the formation of a stable complex. GrpE releases ADP from DnaK; ATP binding to DnaK triggers the release of the substrate protein, thus completing the reaction cycle. Several rounds of ATP-dependent interactions between DnaJ, DnaK and GrpE are required for fully efficient folding. The chain is Protein GrpE from Clostridioides difficile (strain 630) (Peptoclostridium difficile).